Consider the following 504-residue polypeptide: Cobyric acid synthase (504 aa).

Positions 254-442 constitute a GATase cobBQ-type domain; the sequence is AIDVAVIRYP…MHDLFHNDMF (189 aa). Cys336 serves as the catalytic Nucleophile. The active site involves His434.

It belongs to the CobB/CobQ family. CobQ subfamily.

The protein operates within cofactor biosynthesis; adenosylcobalamin biosynthesis. In terms of biological role, catalyzes amidations at positions B, D, E, and G on adenosylcobyrinic A,C-diamide. NH(2) groups are provided by glutamine, and one molecule of ATP is hydrogenolyzed for each amidation. The protein is Cobyric acid synthase of Anoxybacillus flavithermus (strain DSM 21510 / WK1).